The primary structure comprises 861 residues: Actin-binding LIM protein 1 (861 aa).

LIM zinc-binding domains are found at residues Ile97–Thr156, Thr156–Ser216, Ser224–Val283, and Val283–Glu343. Ser216 is modified (phosphoserine). Positions Leu374–His414 are disordered. Residues Cys381–Ile400 show a composition bias toward polar residues. The span at Pro404–Gly413 shows a compositional bias: low complexity. A Phosphoserine modification is found at Ser411. Residues Tyr417 and Tyr440 each carry the phosphotyrosine modification. 2 disordered regions span residues Glu459 to Ala590 and Phe634 to Arg682. Phosphoserine occurs at positions 466, 470, and 475. Residues Leu467–Pro478 are compositionally biased toward polar residues. Residue Thr477 is modified to Phosphothreonine. Ser479 carries the phosphoserine modification. Tyr483 is subject to Phosphotyrosine. Positions Arg493 to Pro518 are enriched in polar residues. Phosphoserine is present on residues Ser496, Ser499, and Ser502. A compositionally biased stretch (low complexity) spans Pro536–His546. Ser582 and Ser671 each carry phosphoserine. The stretch at Arg673–Ser723 forms a coiled coil. Lys704 participates in a covalent cross-link: Glycyl lysine isopeptide (Lys-Gly) (interchain with G-Cter in SUMO2). The interval Glu713–His748 is disordered. Ser723, Ser738, Ser760, and Ser789 each carry phosphoserine. Over residues Pro724 to Ser738 the composition is skewed to low complexity. Residues Met793–Phe861 enclose the HP domain.

In terms of assembly, binds F-actin. Interacts with ABRA. As to expression, isoform 1 is detected in adult retina, where it is highly expressed in the ganglion layer. Detected in rod inner segment. Isoform 2 is highly expressed in adult retina, brain, kidney and heart. Isoform 3 is highly expressed in adult retina, brain, kidney, liver, skeletal muscle, spleen and heart. Detected in embryonic retina, brain, spinal cord, peripheral sensory ganglia and thymus.

It localises to the cytoplasm. Its subcellular location is the cytoskeleton. In terms of biological role, may act as scaffold protein. May play a role in the development of the retina. Has been suggested to play a role in axon guidance. The sequence is that of Actin-binding LIM protein 1 (Ablim1) from Mus musculus (Mouse).